The following is a 326-amino-acid chain: Glyoxylate/hydroxypyruvate reductase B (326 aa).

Active-site residues include arginine 237 and glutamate 266. Histidine 285 serves as the catalytic Proton donor.

This sequence belongs to the D-isomer specific 2-hydroxyacid dehydrogenase family. GhrB subfamily. In terms of assembly, homodimer.

It is found in the cytoplasm. It catalyses the reaction glycolate + NADP(+) = glyoxylate + NADPH + H(+). The enzyme catalyses (R)-glycerate + NAD(+) = 3-hydroxypyruvate + NADH + H(+). The catalysed reaction is (R)-glycerate + NADP(+) = 3-hydroxypyruvate + NADPH + H(+). Catalyzes the NADPH-dependent reduction of glyoxylate and hydroxypyruvate into glycolate and glycerate, respectively. This chain is Glyoxylate/hydroxypyruvate reductase B, found in Yersinia pseudotuberculosis serotype O:3 (strain YPIII).